A 323-amino-acid polypeptide reads, in one-letter code: Phospho-N-acetylmuramoyl-pentapeptide-transferase (323 aa).

The next 9 membrane-spanning stretches (helical) occupy residues 12-32, 58-78, 84-104, 120-140, 151-171, 177-197, 200-220, 229-250, and 303-323; these read IVMAIVISFIVASILGPIIIP, PTIGGLIFIFATIITMFIMVG, AMIALYSFVGFGFVGFLDDLL, MILLLIVSGFLTWYAYKYIGT, INFGLFYIPFVMFYFAGVTNA, GLDGLATSVTVLVTTFLGIIS, LGHISLAIFCVALAGALLAFL, VFMGDTGSLALGGAVAMVALIL, and KIVSVFSIITVVFCFIAFASL.

It belongs to the glycosyltransferase 4 family. MraY subfamily. The cofactor is Mg(2+).

Its subcellular location is the cell membrane. The enzyme catalyses UDP-N-acetyl-alpha-D-muramoyl-L-alanyl-gamma-D-glutamyl-meso-2,6-diaminopimeloyl-D-alanyl-D-alanine + di-trans,octa-cis-undecaprenyl phosphate = di-trans,octa-cis-undecaprenyl diphospho-N-acetyl-alpha-D-muramoyl-L-alanyl-D-glutamyl-meso-2,6-diaminopimeloyl-D-alanyl-D-alanine + UMP. It participates in cell wall biogenesis; peptidoglycan biosynthesis. Functionally, catalyzes the initial step of the lipid cycle reactions in the biosynthesis of the cell wall peptidoglycan: transfers peptidoglycan precursor phospho-MurNAc-pentapeptide from UDP-MurNAc-pentapeptide onto the lipid carrier undecaprenyl phosphate, yielding undecaprenyl-pyrophosphoryl-MurNAc-pentapeptide, known as lipid I. The polypeptide is Phospho-N-acetylmuramoyl-pentapeptide-transferase (Clostridium perfringens (strain ATCC 13124 / DSM 756 / JCM 1290 / NCIMB 6125 / NCTC 8237 / Type A)).